A 157-amino-acid polypeptide reads, in one-letter code: MPSVESFELDHTIVKAPYVRHCGVHNVGSDGIVNKFDIRFCQPNKQAMKPDVIHTLEHLLAFNLRKYIDRYPHFDIIDISPMGCQTGYYLVVSGTPTVREIIDLLELTLKDAVQITEIPAANETQCGQAKLHDLEGAKRLMNFWLSQDKDELEKVFG.

Residues His-54, His-58, and Cys-126 each contribute to the Fe cation site.

The protein belongs to the LuxS family. In terms of assembly, homodimer. It depends on Fe cation as a cofactor.

It carries out the reaction S-(5-deoxy-D-ribos-5-yl)-L-homocysteine = (S)-4,5-dihydroxypentane-2,3-dione + L-homocysteine. Its function is as follows. Involved in the synthesis of autoinducer 2 (AI-2) which is secreted by bacteria and is used to communicate both the cell density and the metabolic potential of the environment. The regulation of gene expression in response to changes in cell density is called quorum sensing. Catalyzes the transformation of S-ribosylhomocysteine (RHC) to homocysteine (HC) and 4,5-dihydroxy-2,3-pentadione (DPD). This chain is S-ribosylhomocysteine lyase, found in Bacillus anthracis (strain A0248).